A 298-amino-acid polypeptide reads, in one-letter code: Protease HtpX homolog (298 aa).

The next 2 helical transmembrane spans lie at 14-34 (VVLLVVFFALLALIGASAGYL) and 39-59 (YAMGLVLALVIGVIYATSMIF). His-143 is a Zn(2+) binding site. Residue Glu-144 is part of the active site. Zn(2+) is bound at residue His-147. 2 helical membrane-spanning segments follow: residues 158 to 178 (IAVALASAVTVISSIGGRMLW) and 197 to 217 (IITLLLSLLSLLLAPLVASLI). A Zn(2+)-binding site is contributed by Glu-226.

This sequence belongs to the peptidase M48B family. Requires Zn(2+) as cofactor.

It localises to the cell membrane. The chain is Protease HtpX homolog from Streptococcus pyogenes serotype M6 (strain ATCC BAA-946 / MGAS10394).